We begin with the raw amino-acid sequence, 284 residues long: Nucleotide-binding protein Teth39_0666 (284 aa).

ATP is bound at residue 8–15; that stretch reads GLSGAGKT. 58 to 61 contributes to the GTP binding site; sequence DLRG.

Belongs to the RapZ-like family.

Displays ATPase and GTPase activities. The chain is Nucleotide-binding protein Teth39_0666 from Thermoanaerobacter pseudethanolicus (strain ATCC 33223 / 39E) (Clostridium thermohydrosulfuricum).